A 564-amino-acid polypeptide reads, in one-letter code: 2-succinyl-5-enolpyruvyl-6-hydroxy-3-cyclohexene-1-carboxylate synthase (564 aa).

Belongs to the TPP enzyme family. MenD subfamily. As to quaternary structure, homodimer. Mg(2+) is required as a cofactor. The cofactor is Mn(2+). It depends on thiamine diphosphate as a cofactor.

The catalysed reaction is isochorismate + 2-oxoglutarate + H(+) = 5-enolpyruvoyl-6-hydroxy-2-succinyl-cyclohex-3-ene-1-carboxylate + CO2. Its pathway is quinol/quinone metabolism; 1,4-dihydroxy-2-naphthoate biosynthesis; 1,4-dihydroxy-2-naphthoate from chorismate: step 2/7. The protein operates within quinol/quinone metabolism; menaquinone biosynthesis. Its function is as follows. Catalyzes the thiamine diphosphate-dependent decarboxylation of 2-oxoglutarate and the subsequent addition of the resulting succinic semialdehyde-thiamine pyrophosphate anion to isochorismate to yield 2-succinyl-5-enolpyruvyl-6-hydroxy-3-cyclohexene-1-carboxylate (SEPHCHC). The polypeptide is 2-succinyl-5-enolpyruvyl-6-hydroxy-3-cyclohexene-1-carboxylate synthase (Vibrio vulnificus (strain YJ016)).